A 601-amino-acid polypeptide reads, in one-letter code: Aspartate--tRNA ligase (601 aa).

E183 provides a ligand contact to L-aspartate. The interval 207–210 (QIFK) is aspartate. R229 serves as a coordination point for L-aspartate. Residues 229–231 (RDE) and Q238 each bind ATP. H457 is an L-aspartate binding site. E497 is a binding site for ATP. R504 provides a ligand contact to L-aspartate. ATP is bound at residue 549–552 (GIDR).

This sequence belongs to the class-II aminoacyl-tRNA synthetase family. Type 1 subfamily. In terms of assembly, homodimer.

Its subcellular location is the cytoplasm. It catalyses the reaction tRNA(Asp) + L-aspartate + ATP = L-aspartyl-tRNA(Asp) + AMP + diphosphate. Functionally, catalyzes the attachment of L-aspartate to tRNA(Asp) in a two-step reaction: L-aspartate is first activated by ATP to form Asp-AMP and then transferred to the acceptor end of tRNA(Asp). The protein is Aspartate--tRNA ligase of Leptospira interrogans serogroup Icterohaemorrhagiae serovar Lai (strain 56601).